A 270-amino-acid polypeptide reads, in one-letter code: tRNA (guanine-N(1)-)-methyltransferase (270 aa).

S-adenosyl-L-methionine is bound by residues Gly-119 and 139 to 144 (IGDYVI).

Belongs to the RNA methyltransferase TrmD family. As to quaternary structure, homodimer.

Its subcellular location is the cytoplasm. The catalysed reaction is guanosine(37) in tRNA + S-adenosyl-L-methionine = N(1)-methylguanosine(37) in tRNA + S-adenosyl-L-homocysteine + H(+). Functionally, specifically methylates guanosine-37 in various tRNAs. The polypeptide is tRNA (guanine-N(1)-)-methyltransferase (Nitrosomonas europaea (strain ATCC 19718 / CIP 103999 / KCTC 2705 / NBRC 14298)).